A 348-amino-acid chain; its full sequence is MATWSGFNVSSSPLLRLRSSSVSNVTKLPFLSPICRRRLLAERFGLATVVVTRQNLTVTPSSAAVEARISGKREPMTPPYNILITGSTKGIGYALAREFLKAGDNVVICSRSAERVETAVQSLKEEFGEHVWGTKCDVTEGKDVRELVAYSQKNLKYIDIWINNAGSNAYSFKPLAEASDEDLIEVVKTNTLGLMLCCREAMNMMLTQSRGGHIFNIDGAGSDGRPTPRFAAYGATKRSVVHLTKSLQAELQMQDVKNVVVHNLSPGMVTTDLLMSGATTKQAKFFINVLAEPAEVVAEYLVPNIRAIPASGSMKPTYIRFLTGIKAYTKIFSRVALGARKNRYVTEE.

A chloroplast-targeting transit peptide spans 1 to 61 (MATWSGFNVS…TRQNLTVTPS (61 aa)). 84–108 (ITGSTKGIGYALAREFLKAGDNVVI) provides a ligand contact to NAD(+). Tyr-233 functions as the Proton acceptor in the catalytic mechanism.

Belongs to the short-chain dehydrogenases/reductases (SDR) family. In terms of assembly, interacts with NCY1 to form a complex that acts as a chlorophyll b reductase. Interacts with HCAR, RCCR and the LHCII complex. Part of a SGR1-CCE-LHCII complex, which acts in chlorophyll breakdown.

It localises to the plastid. The protein localises to the chloroplast thylakoid membrane. The enzyme catalyses 7(1)-hydroxychlorophyllide a + NAD(+) = chlorophyllide b + NADH + H(+). It carries out the reaction 7(1)-hydroxychlorophyllide a + NADP(+) = chlorophyllide b + NADPH + H(+). Required for chlorophyll b degradation. Chlorophyll b, chlorophyllide b, pheophorbide b and pheophytin b can be used as substrates. Belongs to the chlorophyll catabolic enzymes (CCEs). This Arabidopsis thaliana (Mouse-ear cress) protein is Chlorophyll(ide) b reductase NOL, chloroplastic (NOL).